Here is a 430-residue protein sequence, read N- to C-terminus: Tol-Pal system protein TolB (430 aa).

The N-terminal stretch at 1–21 is a signal peptide; sequence MKQALRVAFGFLILWASVLHA.

This sequence belongs to the TolB family. As to quaternary structure, the Tol-Pal system is composed of five core proteins: the inner membrane proteins TolA, TolQ and TolR, the periplasmic protein TolB and the outer membrane protein Pal. They form a network linking the inner and outer membranes and the peptidoglycan layer.

The protein localises to the periplasm. Functionally, part of the Tol-Pal system, which plays a role in outer membrane invagination during cell division and is important for maintaining outer membrane integrity. TolB occupies a key intermediary position in the Tol-Pal system because it communicates directly with both membrane-embedded components, Pal in the outer membrane and TolA in the inner membrane. In Shigella flexneri, this protein is Tol-Pal system protein TolB.